A 216-amino-acid chain; its full sequence is Cytidylate kinase (216 aa).

7–15 (GPSGTGKST) lines the ATP pocket.

It belongs to the cytidylate kinase family. Type 1 subfamily.

It localises to the cytoplasm. It carries out the reaction CMP + ATP = CDP + ADP. The enzyme catalyses dCMP + ATP = dCDP + ADP. This Chlamydia caviae (strain ATCC VR-813 / DSM 19441 / 03DC25 / GPIC) (Chlamydophila caviae) protein is Cytidylate kinase.